The following is a 1883-amino-acid chain: Chromodomain-helicase-DNA-binding protein 1 (1883 aa).

The span at Met-1–Ser-14 shows a compositional bias: polar residues. Positions Met-1–Asp-293 are disordered. The span at Ser-39–Arg-56 shows a compositional bias: low complexity. Residues Gln-114–Leu-128 show a composition bias toward polar residues. A compositionally biased stretch (low complexity) spans Asp-159–Ser-172. Positions Ser-213–Val-226 are enriched in acidic residues. A compositionally biased stretch (polar residues) spans Ala-236–Gln-247. The span at Ser-284–Asp-293 shows a compositional bias: acidic residues. Chromo domains are found at residues Glu-318–Arg-414 and Asn-439–Arg-501. The Helicase ATP-binding domain occupies Leu-540–Asp-710. Asp-553 to Thr-560 is a binding site for ATP. A DEAH box motif is present at residues Asp-661–His-664. A Helicase C-terminal domain is found at Leu-840–Thr-991. 5 disordered regions span residues Phe-1074 to Lys-1185, His-1246 to Arg-1265, Thr-1390 to Thr-1491, Lys-1599 to Ser-1829, and Pro-1848 to Thr-1883. Positions Gly-1091–Ile-1103 are enriched in acidic residues. The segment covering Gly-1106 to Glu-1121 has biased composition (basic and acidic residues). Residues Gly-1393–Ala-1402 show a composition bias toward basic residues. Over residues Ala-1437–Pro-1451 the composition is skewed to polar residues. A compositionally biased stretch (basic residues) spans Lys-1466–Lys-1476. Positions Leu-1505–Ala-1606 are CHD1 helical C-terminal domain (CHCT). Residues Ala-1600 to Gly-1612 are compositionally biased toward basic and acidic residues. Residues Ser-1613–Pro-1622 show a composition bias toward low complexity. Over residues Thr-1627–Gly-1638 the composition is skewed to basic and acidic residues. Gly residues predominate over residues Tyr-1724–Glu-1738. Over residues Asn-1742 to Arg-1755 the composition is skewed to polar residues. Composition is skewed to basic and acidic residues over residues Glu-1773–Gly-1794, Tyr-1805–Arg-1817, and Tyr-1868–Thr-1883.

It belongs to the SNF2/RAD54 helicase family. Monomer. Component of the SAGA complex. Interacts with SSRP1.

It localises to the nucleus. Its subcellular location is the chromosome. The enzyme catalyses ATP + H2O = ADP + phosphate + H(+). Its function is as follows. ATP-dependent chromatin-remodeling factor which functions as substrate recognition component of the transcription regulatory histone acetylation (HAT) complex SAGA. Regulates polymerase II transcription. Also required for efficient transcription by RNA polymerase I, and more specifically the polymerase I transcription termination step. Regulates negatively DNA replication. Not only involved in transcription-related chromatin remodeling, but also required to maintain a specific chromatin configuration across the genome. Involved in assembly of active chromatin. Required for maintaining open chromatin and pluripotency in embryonic stem cells and is important for wing development and fertility. Is essential for the incorporation of histone H3.3 and assembly of paternal chromatin. Required for replication-independent nucleosome assembly in the decondensing male pronucleus. The protein is Chromodomain-helicase-DNA-binding protein 1 (Chd1) of Drosophila melanogaster (Fruit fly).